Here is a 128-residue protein sequence, read N- to C-terminus: Ribonuclease P protein component (128 aa).

It belongs to the RnpA family. In terms of assembly, consists of a catalytic RNA component (M1 or rnpB) and a protein subunit.

It carries out the reaction Endonucleolytic cleavage of RNA, removing 5'-extranucleotides from tRNA precursor.. Functionally, RNaseP catalyzes the removal of the 5'-leader sequence from pre-tRNA to produce the mature 5'-terminus. It can also cleave other RNA substrates such as 4.5S RNA. The protein component plays an auxiliary but essential role in vivo by binding to the 5'-leader sequence and broadening the substrate specificity of the ribozyme. The protein is Ribonuclease P protein component of Mycoplasma genitalium (strain ATCC 33530 / DSM 19775 / NCTC 10195 / G37) (Mycoplasmoides genitalium).